Reading from the N-terminus, the 237-residue chain is Purine nucleoside phosphorylase DeoD-type (237 aa).

H4 contacts a purine D-ribonucleoside. Phosphate contacts are provided by residues G20, R24, R43, and 87 to 90 (RVGT). A purine D-ribonucleoside-binding positions include 179–181 (EME) and 203–204 (SD). The Proton donor role is filled by D204.

This sequence belongs to the PNP/UDP phosphorylase family. In terms of assembly, homohexamer; trimer of homodimers.

The enzyme catalyses a purine D-ribonucleoside + phosphate = a purine nucleobase + alpha-D-ribose 1-phosphate. It carries out the reaction a purine 2'-deoxy-D-ribonucleoside + phosphate = a purine nucleobase + 2-deoxy-alpha-D-ribose 1-phosphate. Catalyzes the reversible phosphorolytic breakdown of the N-glycosidic bond in the beta-(deoxy)ribonucleoside molecules, with the formation of the corresponding free purine bases and pentose-1-phosphate. This Streptococcus pyogenes serotype M4 (strain MGAS10750) protein is Purine nucleoside phosphorylase DeoD-type.